The sequence spans 139 residues: D-ribose pyranase (139 aa).

His20 functions as the Proton donor in the catalytic mechanism. Residues Asp28, His106, and 128–130 each bind substrate; that span reads YAN.

It belongs to the RbsD / FucU family. RbsD subfamily. In terms of assembly, homodecamer.

Its subcellular location is the cytoplasm. It catalyses the reaction beta-D-ribopyranose = beta-D-ribofuranose. It functions in the pathway carbohydrate metabolism; D-ribose degradation; D-ribose 5-phosphate from beta-D-ribopyranose: step 1/2. In terms of biological role, catalyzes the interconversion of beta-pyran and beta-furan forms of D-ribose. In Salmonella typhi, this protein is D-ribose pyranase.